We begin with the raw amino-acid sequence, 236 residues long: Phosphoribosylaminoimidazole-succinocarboxamide synthase (236 aa).

It belongs to the SAICAR synthetase family.

The enzyme catalyses 5-amino-1-(5-phospho-D-ribosyl)imidazole-4-carboxylate + L-aspartate + ATP = (2S)-2-[5-amino-1-(5-phospho-beta-D-ribosyl)imidazole-4-carboxamido]succinate + ADP + phosphate + 2 H(+). It functions in the pathway purine metabolism; IMP biosynthesis via de novo pathway; 5-amino-1-(5-phospho-D-ribosyl)imidazole-4-carboxamide from 5-amino-1-(5-phospho-D-ribosyl)imidazole-4-carboxylate: step 1/2. The protein is Phosphoribosylaminoimidazole-succinocarboxamide synthase of Pseudomonas aeruginosa (strain LESB58).